The following is a 396-amino-acid chain: Major outer membrane porin, serovar A (396 aa).

The signal sequence occupies residues 1 to 22 (MKKLLKSVLVFAALSSASSLQA).

It belongs to the chlamydial porin (CP) (TC 1.B.2) family. In terms of assembly, part of a disulfide cross-linked outer membrane complex (COMC) composed of the major outer membrane porin (MOMP), the small cysteine-rich protein (OmcA) and the large cysteine-rich periplasmic protein (OmcB).

It is found in the cell outer membrane. Its function is as follows. In elementary bodies (EBs, the infectious stage, which is able to survive outside the host cell) provides the structural integrity of the outer envelope through disulfide cross-links with the small cysteine-rich protein and the large cysteine-rich periplasmic protein. It has been described in publications as the Sarkosyl-insoluble COMC (Chlamydia outer membrane complex), and serves as the functional equivalent of peptidoglycan. In terms of biological role, permits diffusion of specific solutes through the outer membrane. The sequence is that of Major outer membrane porin, serovar A (ompA) from Chlamydia trachomatis.